The sequence spans 396 residues: Na(+)/H(+) antiporter NhaA 1 (396 aa).

Helical transmembrane passes span 9 to 29 (LHNEAASGVLIFLAAVAAMLI), 59 to 79 (LLLWINDGLMAVFFLLVGLEL), 95 to 115 (VLPVVGAVGGIVGPALIYVMF), 125 to 145 (GWAVPTATDIAFAMGVLALLG), 154 to 174 (LFLLTLAIIDDLVAIVIIAIF), 177 to 197 (SDLSVGSLTVAGGAIALLFLL), 200 to 220 (IGVKGIAPYVLVGMVLWVAVL), 223 to 243 (GVHATLAGVVLAMAIPIKGET), 260 to 280 (VVGLVILPLFAFANAGVSLAG), 281 to 301 (LGLNVLLEPVAMGIGLGLLLG), 332 to 352 (GVALLCGIGFTMSLFISSLAF), and 373 to 393 (ILSGSLVSGVLGYLVLRFSLA).

This sequence belongs to the NhaA Na(+)/H(+) (TC 2.A.33) antiporter family.

The protein localises to the cell inner membrane. It catalyses the reaction Na(+)(in) + 2 H(+)(out) = Na(+)(out) + 2 H(+)(in). Its function is as follows. Na(+)/H(+) antiporter that extrudes sodium in exchange for external protons. The polypeptide is Na(+)/H(+) antiporter NhaA 1 (Magnetococcus marinus (strain ATCC BAA-1437 / JCM 17883 / MC-1)).